The sequence spans 386 residues: Phosphoglycerate kinase (386 aa).

Residues 21–23 (DLN), R36, 59–62 (HLGR), R113, and R146 contribute to the substrate site. Residues K197, E314, and 340 to 343 (GGDT) each bind ATP.

The protein belongs to the phosphoglycerate kinase family. As to quaternary structure, monomer.

The protein resides in the cytoplasm. The enzyme catalyses (2R)-3-phosphoglycerate + ATP = (2R)-3-phospho-glyceroyl phosphate + ADP. It functions in the pathway carbohydrate degradation; glycolysis; pyruvate from D-glyceraldehyde 3-phosphate: step 2/5. The chain is Phosphoglycerate kinase from Vibrio vulnificus (strain CMCP6).